Here is a 209-residue protein sequence, read N- to C-terminus: U1 small nuclear ribonucleoprotein C (209 aa).

The Matrin-type zinc finger occupies 4–36 (HYCDYCDVFLTHDSASVRKAHNSGRNHLANVRD). The span at 72-87 (PQHLQAPPQGGFAPPM) shows a compositional bias: low complexity. Residues 72 to 209 (PQHLQAPPQG…RARMMGPGGR (138 aa)) are disordered. 2 stretches are compositionally biased toward pro residues: residues 93–150 (GGFP…PFPP) and 159–191 (PGAP…PTNP).

Belongs to the U1 small nuclear ribonucleoprotein C family. In terms of assembly, U1 snRNP is composed of the 7 core Sm proteins B/B', D1, D2, D3, E, F and G that assemble in a heptameric protein ring on the Sm site of the small nuclear RNA to form the core snRNP, and at least 3 U1 snRNP-specific proteins U1-70K, U1-A and U1-C. U1-C interacts with U1 snRNA and the 5' splice-site region of the pre-mRNA.

It is found in the nucleus. In terms of biological role, component of the spliceosomal U1 snRNP, which is essential for recognition of the pre-mRNA 5' splice-site and the subsequent assembly of the spliceosome. U1-C is directly involved in initial 5' splice-site recognition for both constitutive and regulated alternative splicing. The interaction with the 5' splice-site seems to precede base-pairing between the pre-mRNA and the U1 snRNA. Stimulates commitment or early (E) complex formation by stabilizing the base pairing of the 5' end of the U1 snRNA and the 5' splice-site region. The chain is U1 small nuclear ribonucleoprotein C from Coprinopsis cinerea (strain Okayama-7 / 130 / ATCC MYA-4618 / FGSC 9003) (Inky cap fungus).